Reading from the N-terminus, the 119-residue chain is uncharacterized protein (119 aa).

The next 4 membrane-spanning stretches (helical) occupy residues 3 to 23, 29 to 49, 58 to 78, and 87 to 107; these read WVFL…MKLS, LIPS…LTLT, AYAV…FLFF, and VISI…EHVA.

This sequence belongs to the drug/metabolite transporter (DMT) superfamily. Small multidrug resistance (SMR) (TC 2.A.7.1) family.

The protein localises to the cell membrane. This is an uncharacterized protein from Bacillus subtilis (strain 168).